A 165-amino-acid chain; its full sequence is E3 ubiquitin ligase complex SCF subunit sconC (165 aa).

An interaction with the F-box domain of F-box proteins region spans residues 106-165 (ILAANYLDIKALLDVGCKTVANMIKGKSPEEIRKTFNIQNDFTPEEEDQIRRENEWAEDR).

This sequence belongs to the SKP1 family. As to quaternary structure, component of the SCF (SKP1-CUL1-F-box protein) E3 ubiquitin ligase complexes.

The protein operates within protein modification; protein ubiquitination. In terms of biological role, essential component of the SCF (SKP1-CUL1-F-box protein) E3 ubiquitin ligase complexes, which mediate the ubiquitination and subsequent proteasomal degradation of target proteins. Controls sulfur metabolite repression, probably by mediating the inactivation or degradation of the metR transcription factor. This Arthroderma otae (strain ATCC MYA-4605 / CBS 113480) (Microsporum canis) protein is E3 ubiquitin ligase complex SCF subunit sconC (sconC).